The primary structure comprises 641 residues: Probable ATP-dependent helicase YpvA (641 aa).

One can recognise a Helicase ATP-binding domain in the interval 29–303 (YDILPEKGFD…EFAELIEDAL (275 aa)). An ATP-binding site is contributed by 64–71 (AGVGTGKT). The [4Fe-4S] cluster site is built by C133, C197, C200, and C206. A DEGH box motif is present at residues 257–260 (DEGH).

It belongs to the helicase family. DinG subfamily. Requires [4Fe-4S] cluster as cofactor.

The enzyme catalyses Couples ATP hydrolysis with the unwinding of duplex DNA at the replication fork by translocating in the 5'-3' direction. This creates two antiparallel DNA single strands (ssDNA). The leading ssDNA polymer is the template for DNA polymerase III holoenzyme which synthesizes a continuous strand.. The catalysed reaction is ATP + H2O = ADP + phosphate + H(+). Its function is as follows. Might be a 5'-3' DNA helicase. This Bacillus subtilis (strain 168) protein is Probable ATP-dependent helicase YpvA (ypvA).